A 200-amino-acid polypeptide reads, in one-letter code: Probable GTP-binding protein EngB (200 aa).

Positions 22–195 constitute an EngB-type G domain; the sequence is GKDEIAFVGR…INNICSGINY (174 aa). GTP-binding positions include 30 to 37, 57 to 61, 75 to 78, 142 to 145, and 174 to 176; these read GRSNVGKS, GKTRL, DLPG, TKSD, and FSS. The Mg(2+) site is built by Ser-37 and Thr-59.

It belongs to the TRAFAC class TrmE-Era-EngA-EngB-Septin-like GTPase superfamily. EngB GTPase family. Mg(2+) serves as cofactor.

Its function is as follows. Necessary for normal cell division and for the maintenance of normal septation. This Clostridium acetobutylicum (strain ATCC 824 / DSM 792 / JCM 1419 / IAM 19013 / LMG 5710 / NBRC 13948 / NRRL B-527 / VKM B-1787 / 2291 / W) protein is Probable GTP-binding protein EngB.